Here is a 676-residue protein sequence, read N- to C-terminus: Cysteine-rich receptor-like protein kinase 8 (676 aa).

The first 34 residues, 1-34 (MYIVSMFGLAGLEALICFIFLFLFSFLTSFKASA), serve as a signal peptide directing secretion. The Extracellular portion of the chain corresponds to 35 to 291 (QNPFYLNHDC…IPGKSGNSTV (257 aa)). Gnk2-homologous domains are found at residues 38–142 (FYLN…HKNF) and 151–255 (ELIM…LYAF). N-linked (GlcNAc...) asparagine glycans are attached at residues Asn-46, Asn-53, Asn-71, Asn-114, Asn-159, Asn-187, Asn-257, and Asn-288. Residues 292–312 (LVVAIVVLAVLLFIALVGYCF) form a helical membrane-spanning segment. The Cytoplasmic portion of the chain corresponds to 313–676 (LAQRTKKTFD…DELITDLYPR (364 aa)). Positions 353–639 (FAESNKIGRG…TLPVPRQPGF (287 aa)) constitute a Protein kinase domain. ATP contacts are provided by residues 359-367 (IGRGGFGEV) and Lys-381. Tyr-426 carries the post-translational modification Phosphotyrosine. Asp-478 serves as the catalytic Proton acceptor. A Phosphoserine modification is found at Ser-482. Thr-518 carries the phosphothreonine modification. The residue at position 526 (Tyr-526) is a Phosphotyrosine. Residues 640 to 666 (FIQSSPVKDPTDSDQSTTTKSTPASID) are disordered. The segment covering 652 to 662 (SDQSTTTKSTP) has biased composition (low complexity).

The protein belongs to the protein kinase superfamily. Ser/Thr protein kinase family. CRK subfamily.

It is found in the membrane. It carries out the reaction L-seryl-[protein] + ATP = O-phospho-L-seryl-[protein] + ADP + H(+). The catalysed reaction is L-threonyl-[protein] + ATP = O-phospho-L-threonyl-[protein] + ADP + H(+). The chain is Cysteine-rich receptor-like protein kinase 8 (CRK8) from Arabidopsis thaliana (Mouse-ear cress).